Here is a 177-residue protein sequence, read N- to C-terminus: ATP synthase subunit b, chloroplastic (177 aa).

A helical membrane pass occupies residues 26–44 (IINLSIVLFVVIRFLGEAL).

The protein belongs to the ATPase B chain family. In terms of assembly, F-type ATPases have 2 components, F(1) - the catalytic core - and F(0) - the membrane proton channel. F(1) has five subunits: alpha(3), beta(3), gamma(1), delta(1), epsilon(1). F(0) has four main subunits: a(1), b(1), b'(1) and c(10-14). The alpha and beta chains form an alternating ring which encloses part of the gamma chain. F(1) is attached to F(0) by a central stalk formed by the gamma and epsilon chains, while a peripheral stalk is formed by the delta, b and b' chains.

The protein resides in the plastid. It localises to the chloroplast thylakoid membrane. In terms of biological role, f(1)F(0) ATP synthase produces ATP from ADP in the presence of a proton or sodium gradient. F-type ATPases consist of two structural domains, F(1) containing the extramembraneous catalytic core and F(0) containing the membrane proton channel, linked together by a central stalk and a peripheral stalk. During catalysis, ATP synthesis in the catalytic domain of F(1) is coupled via a rotary mechanism of the central stalk subunits to proton translocation. Its function is as follows. Component of the F(0) channel, it forms part of the peripheral stalk, linking F(1) to F(0). The chain is ATP synthase subunit b, chloroplastic from Bigelowiella natans (Pedinomonas minutissima).